The following is a 998-amino-acid chain: Calcium-transporting ATPase 3, endoplasmic reticulum-type (998 aa).

The Cytoplasmic portion of the chain corresponds to 1-48 (MEDAYARSVSEVLDFFGVDPTKGLSDSQVVHHSRLYGRNVLPEEKRTP). Residues 49–69 (FWKLVLKQFDDLLVKILIVAA) form a helical membrane-spanning segment. Topologically, residues 70-89 (IVSFVLALANGETGLTAFLE) are lumenal. Residues 90 to 109 (PFVILLILAANAAVGVITET) form a helical membrane-spanning segment. Over 110-250 (NAEKALEELR…DEATPLKKKL (141 aa)) the chain is Cytoplasmic. A helical membrane pass occupies residues 251–270 (DEFGSFLAKVIAGICVLVWV). Residues 271-291 (VNIGHFSDPSHGGFFKGAIHY) lie on the Lumenal side of the membrane. A helical membrane pass occupies residues 292-309 (FKIAVALAVAAIPEGLPA). Ca(2+) contacts are provided by V300, A301, I303, and E305. At 310–746 (VVTTCLALGT…AEGRAIYNNT (437 aa)) the chain is on the cytoplasmic side. D347 functions as the 4-aspartylphosphate intermediate in the catalytic mechanism. Residues D692 and D696 each coordinate Mg(2+). The helical transmembrane segment at 747-766 (KQFIRYMISSNIGEVVCIFV) threads the bilayer. 2 residues coordinate Ca(2+): N757 and E760. The Lumenal portion of the chain corresponds to 767-776 (AAVLGIPDTL). Residues 777 to 797 (APVQLLWVNLVTDGLPATAIG) traverse the membrane as a helical segment. N785, T788, and D789 together coordinate Ca(2+). Residues 798 to 817 (FNKQDSDVMKAKPRKVGEAV) lie on the Cytoplasmic side of the membrane. A helical transmembrane segment spans residues 818–840 (VTGWLFFRYLVIGVYVGLATVAG). At 841-883 (FIWWFVYSDGGPKLTYSELMNFETCALRETTYPCSIFEDRHPS) the chain is on the lumenal side. Residues 884–903 (TVAMTVLVVVEMFNALNNLS) form a helical membrane-spanning segment. E894 lines the Ca(2+) pocket. The Cytoplasmic portion of the chain corresponds to 904-916 (ENQSLLVITPRSN). The chain crosses the membrane as a helical span at residues 917 to 935 (LWLVGSIILTMLLHVLILY). The Lumenal segment spans residues 936 to 950 (VHPLAVLFSVTPLSW). Residues 951 to 971 (AEWTAVLYLSFPVIIIDELLK) form a helical membrane-spanning segment. Residues 972–998 (FLSRNTGMRFRFRLRKADLLPKDRRDK) lie on the Cytoplasmic side of the membrane.

The protein belongs to the cation transport ATPase (P-type) (TC 3.A.3) family. Type IIA subfamily. As to expression, expressed in root cap, in elongation and differentiation zones of roots, in vascular tissues of roots, leaves, floral pedicels and style, in leaves, including hydathodes and guard cells, in stamens, in petals, in sepals and in siliques.

The protein localises to the golgi apparatus membrane. It localises to the endosome membrane. The protein resides in the prevacuolar compartment membrane. It catalyses the reaction Ca(2+)(in) + ATP + H2O = Ca(2+)(out) + ADP + phosphate + H(+). In terms of biological role, this magnesium-dependent enzyme catalyzes the hydrolysis of ATP coupled with the translocation of calcium from the cytosol to an endomembrane compartment. Involved in calcium-enhanced root growth, in tolerance to toxic levels of manganese and in secretory processes. Has a crucial role in manganese nutrition, but is not involved in transporting copper, iron or zinc. The sequence is that of Calcium-transporting ATPase 3, endoplasmic reticulum-type from Arabidopsis thaliana (Mouse-ear cress).